Here is a 38-residue protein sequence, read N- to C-terminus: Large ribosomal subunit protein bL36 (38 aa).

The protein belongs to the bacterial ribosomal protein bL36 family.

The chain is Large ribosomal subunit protein bL36 from Limosilactobacillus fermentum (strain NBRC 3956 / LMG 18251) (Lactobacillus fermentum).